A 489-amino-acid chain; its full sequence is Beta-glucosidase 14 (489 aa).

An N-terminal signal peptide occupies residues 1-21 (MTSKYFSVLVFIILASNEVVA). An a beta-D-glucoside-binding site is contributed by Gln-49. N-linked (GlcNAc...) asparagine glycosylation occurs at Asn-80. Residues His-153 and 198 to 199 (NE) contribute to the a beta-D-glucoside site. Glu-199 (proton donor) is an active-site residue. Cys-218 and Cys-226 are joined by a disulfide. Asn-225 is a glycosylation site (N-linked (GlcNAc...) asparagine). Tyr-343 contacts a beta-D-glucoside. Residue Asn-357 is glycosylated (N-linked (GlcNAc...) asparagine). A beta-D-glucoside is bound by residues Glu-396, Trp-441, 448 to 449 (EW), and Phe-457. The Nucleophile role is filled by Glu-396.

This sequence belongs to the glycosyl hydrolase 1 family.

The enzyme catalyses Hydrolysis of terminal, non-reducing beta-D-glucosyl residues with release of beta-D-glucose.. The protein is Beta-glucosidase 14 of Arabidopsis thaliana (Mouse-ear cress).